We begin with the raw amino-acid sequence, 96 residues long: Phosphoribosyl-ATP pyrophosphatase (96 aa).

The protein belongs to the PRA-PH family.

The protein localises to the cytoplasm. The catalysed reaction is 1-(5-phospho-beta-D-ribosyl)-ATP + H2O = 1-(5-phospho-beta-D-ribosyl)-5'-AMP + diphosphate + H(+). Its pathway is amino-acid biosynthesis; L-histidine biosynthesis; L-histidine from 5-phospho-alpha-D-ribose 1-diphosphate: step 2/9. This chain is Phosphoribosyl-ATP pyrophosphatase, found in Methanococcus maripaludis (strain C6 / ATCC BAA-1332).